Consider the following 177-residue polypeptide: Large ribosomal subunit protein uL6 (177 aa).

It belongs to the universal ribosomal protein uL6 family. As to quaternary structure, part of the 50S ribosomal subunit.

This protein binds to the 23S rRNA, and is important in its secondary structure. It is located near the subunit interface in the base of the L7/L12 stalk, and near the tRNA binding site of the peptidyltransferase center. This is Large ribosomal subunit protein uL6 from Methylococcus capsulatus (strain ATCC 33009 / NCIMB 11132 / Bath).